The sequence spans 415 residues: MDGKTYKLRASCNACNESKVRCSQTKPTCARCERNKTTCVYGLSRRTHKDAPPISLSHSHSHSHSGSQPHSHSGSRRSSVHIPNATATANATTTANYTSTTTPFMPLHENSMTSYPPQPSVDQFFAQQQPHHQQPSTAGPGPGILSPANLDLPSFMTPLPTPNEDHTNSLFSSFGNFAAGVGGVNGSVNNILTPLTGSPGTGTSASTSTDMFQQPQVQECTCHAGVMEQMASMSQPSRNEERRLSLDVQLSQLKRCIIASEASMGCGHHGNGDSEPINIISVAMLIGRIIDEFELMLNERIGRGTTMPERERSLSLDEATISIREPRLCWGVLELEDDDEVELRQRLYLLYFRKLERLLSQLNVFVRTLHDSRGGSCNPTFIMACEYIHLWLEKKAEGVKRLFPAADEYTGRIPS.

The zn(2)-C6 fungal-type DNA-binding region spans Cys12 to Cys39. The disordered stretch occupies residues Asp50–Pro153. 2 stretches are compositionally biased toward low complexity: residues Val80 to Thr102 and Gln123 to Pro135.

The protein resides in the nucleus. Functionally, transcriptional regulator that postively regulates the expression of the gene cluster that mediates the biosynthesis of flavoglaucin and congeners (including aspergin, dihydroauroglaucin and auroglaucin), prenylated salicylaldehyde derivatives carrying a saturated or an unsaturated C-7 side chain. The polypeptide is Transcriptional regulator fogI (Aspergillus ruber (strain CBS 135680)).